A 26-amino-acid polypeptide reads, in one-letter code: Delta-hemolysin (26 aa).

At Met-1 the chain carries N-formylmethionine.

This sequence belongs to the delta-lysin family.

It localises to the secreted. The protein localises to the host cell membrane. Lyses erythrocytes and many other mammalian cells. The chain is Delta-hemolysin (hld) from Staphylococcus aureus (strain MSSA476).